Consider the following 317-residue polypeptide: Acetyl-coenzyme A carboxylase carboxyl transferase subunit beta (317 aa).

A CoA carboxyltransferase N-terminal domain is found at 30-299 (LWTKCVACTA…VLPPLNVREK (270 aa)). Residues cysteine 34, cysteine 37, cysteine 53, and cysteine 56 each coordinate Zn(2+). The C4-type zinc-finger motif lies at 34–56 (CVACTALTYTKDLQANQLVCTEC).

This sequence belongs to the AccD/PCCB family. As to quaternary structure, acetyl-CoA carboxylase is a heterohexamer composed of biotin carboxyl carrier protein (AccB), biotin carboxylase (AccC) and two subunits each of ACCase subunit alpha (AccA) and ACCase subunit beta (AccD). It depends on Zn(2+) as a cofactor.

Its subcellular location is the cytoplasm. The enzyme catalyses N(6)-carboxybiotinyl-L-lysyl-[protein] + acetyl-CoA = N(6)-biotinyl-L-lysyl-[protein] + malonyl-CoA. The protein operates within lipid metabolism; malonyl-CoA biosynthesis; malonyl-CoA from acetyl-CoA: step 1/1. Functionally, component of the acetyl coenzyme A carboxylase (ACC) complex. Biotin carboxylase (BC) catalyzes the carboxylation of biotin on its carrier protein (BCCP) and then the CO(2) group is transferred by the transcarboxylase to acetyl-CoA to form malonyl-CoA. This chain is Acetyl-coenzyme A carboxylase carboxyl transferase subunit beta, found in Crocosphaera subtropica (strain ATCC 51142 / BH68) (Cyanothece sp. (strain ATCC 51142)).